A 589-amino-acid chain; its full sequence is Zinc finger and BTB domain-containing protein 46 (589 aa).

A BTB domain is found at 31–99 (CDVCVVVEGK…MYSAHLALTS (69 aa)). A disordered region spans residues 173 to 330 (RRTSPANSSG…ASSSDSRGER (158 aa)). The segment covering 197–207 (GKEDQEPKADG) has biased composition (basic and acidic residues). K229 participates in a covalent cross-link: Glycyl lysine isopeptide (Lys-Gly) (interchain with G-Cter in SUMO2). The residue at position 234 (S234) is a Phosphoserine. A compositionally biased stretch (polar residues) spans 305–325 (WPFSSRDSNADLSVTEASSSD). 2 C2H2-type zinc fingers span residues 418 to 436 (FKCPYCSFSAMHQCILKRH) and 446 to 468 (YPCEICGKKFTRREHMKRHTLVH). Residues 512 to 589 (PLDHGGGGGE…GPDKDFAWLS (78 aa)) are disordered. Acidic residues predominate over residues 546–570 (EELGEDDEGLAPEDALLADDKDEED).

In terms of processing, sumoylated. Desumoylation by DESI1 reverses transcriptional repression activity.

It localises to the nucleus. Its function is as follows. Functions as a transcriptional repressor for PRDM1. This is Zinc finger and BTB domain-containing protein 46 (ZBTB46) from Homo sapiens (Human).